Reading from the N-terminus, the 530-residue chain is Negative elongation factor A (530 aa).

The HDAg domain maps to 89–248 (WVLMVADILK…TPIPPSRTPL (160 aa)). The NELF-C/D-binding stretch occupies residues 125–188 (REKVSECEAS…LQKSTETAQQ (64 aa)). Phosphothreonine is present on Thr-157. The interval 189-248 (LKRSAGVPFHAKGRGLLRKMDTTTPLKGIPKQAPFRSPTTPSVFSPSGNRTPIPPSRTPL) is RNAPII-binding. Disordered stretches follow at residues 213 to 248 (PLKG…RTPL), 266 to 296 (GAGR…VENA), and 312 to 409 (SLNS…TAQT). Phosphoserine occurs at positions 225 and 233. The segment covering 225–238 (SPTTPSVFSPSGNR) has biased composition (polar residues). A Phosphothreonine modification is found at Thr-277. Residues 277–291 (TLDTEVVEKPTKEET) are compositionally biased toward basic and acidic residues. The span at 315–341 (SEPTLPSTSYLPSTPSVVPASSYIPSS) shows a compositional bias: low complexity. Ser-363 bears the Phosphoserine mark.

Belongs to the NELF-A family. As to quaternary structure, the NELF complex is composed of NELFA, NELFB, NELFCD and NELFE; NELFA and NELFCD form a stable subcomplex that binds to the N-terminus of NELFB. In vitro, the NELFA:NELFCD subcomplex binds to ssDNA and ssRNA in a sequence- and structure-dependent manner. Interacts with the RNA polymerase II complex when it is not phosphorylated by P-TEFb. Interacts with NELFB. As to expression, ubiquitous. Expressed in brain, heart, spleen, lung, liver, muscle, kidney and testis. Already expressed in 7 dpc embryos.

The protein resides in the nucleus. Functionally, essential component of the NELF complex, a complex that negatively regulates the elongation of transcription by RNA polymerase II. The NELF complex, which acts via an association with the DSIF complex and causes transcriptional pausing, is counteracted by the P-TEFb kinase complex. In Mus musculus (Mouse), this protein is Negative elongation factor A (Nelfa).